A 279-amino-acid chain; its full sequence is MVIKAKSPAGFAEKYIIESIWNGRFPPGSILPAERELSELIGVTRTTLREVLQRLARDGWLTIQHGKPTKVNQFMETSGLHILDTLMTLDVDNATNIVEDLLAARTNISPIFMRYAFKVNKENSERTIKTVIDSCEQLVAAESWDAFLSSSPYADKIQQNVKEDNEKDEAKRQEILIAKTFNFYDYMLFQRLAFHSGNQIYGLIFNGLKKLYDRVGSFYFSNPASRELALKFYRQLLLTCESGQREQLPALIRQYGIESAMIWNEMKKQLPTNFTEDDC.

An HTH gntR-type domain is found at 6 to 74; it reads KSPAGFAEKY…HGKPTKVNQF (69 aa). Positions 34–53 form a DNA-binding region, H-T-H motif; sequence ERELSELIGVTRTTLREVLQ.

As to quaternary structure, homodimer.

The protein localises to the cytoplasm. Its function is as follows. Multifunctional regulator of fatty acid metabolism. This chain is Fatty acid metabolism regulator protein, found in Vibrio vulnificus (strain CMCP6).